We begin with the raw amino-acid sequence, 73 residues long: Methionyl-tRNA formyltransferase (73 aa).

Belongs to the Fmt family.

The enzyme catalyses L-methionyl-tRNA(fMet) + (6R)-10-formyltetrahydrofolate = N-formyl-L-methionyl-tRNA(fMet) + (6S)-5,6,7,8-tetrahydrofolate + H(+). Functionally, attaches a formyl group to the free amino group of methionyl-tRNA(fMet). The formyl group appears to play a dual role in the initiator identity of N-formylmethionyl-tRNA by promoting its recognition by IF2 and preventing the misappropriation of this tRNA by the elongation apparatus. The polypeptide is Methionyl-tRNA formyltransferase (fmt) (Rickettsia rickettsii).